The primary structure comprises 208 residues: MIGMLTGRVESVETDTALIDVGGVGYETRMPATDLGRLHAGQDACVFTYLNLSQDSVTLYGFLDRDSKRVFLQLIKVSGIGPKVAQSLLGTMTPSQLARAIADNDAAALAKAPGLGRKGAQKIILELKGSVDLNQSDDASAGNAPYQPTVDAGVEQVVEGLVSLGWRQQDAQRAVNEACAENDVPMPLASDDAPRVLRLALARMDRGR.

The domain I stretch occupies residues 1-63 (MIGMLTGRVE…QDSVTLYGFL (63 aa)). Residues 64 to 142 (DRDSKRVFLQ…LNQSDDASAG (79 aa)) are domain II. Residues 143 to 151 (NAPYQPTVD) form a flexible linker region. A domain III region spans residues 151-208 (DAGVEQVVEGLVSLGWRQQDAQRAVNEACAENDVPMPLASDDAPRVLRLALARMDRGR).

The protein belongs to the RuvA family. In terms of assembly, homotetramer. Forms an RuvA(8)-RuvB(12)-Holliday junction (HJ) complex. HJ DNA is sandwiched between 2 RuvA tetramers; dsDNA enters through RuvA and exits via RuvB. An RuvB hexamer assembles on each DNA strand where it exits the tetramer. Each RuvB hexamer is contacted by two RuvA subunits (via domain III) on 2 adjacent RuvB subunits; this complex drives branch migration. In the full resolvosome a probable DNA-RuvA(4)-RuvB(12)-RuvC(2) complex forms which resolves the HJ.

The protein localises to the cytoplasm. The RuvA-RuvB-RuvC complex processes Holliday junction (HJ) DNA during genetic recombination and DNA repair, while the RuvA-RuvB complex plays an important role in the rescue of blocked DNA replication forks via replication fork reversal (RFR). RuvA specifically binds to HJ cruciform DNA, conferring on it an open structure. The RuvB hexamer acts as an ATP-dependent pump, pulling dsDNA into and through the RuvAB complex. HJ branch migration allows RuvC to scan DNA until it finds its consensus sequence, where it cleaves and resolves the cruciform DNA. The sequence is that of Holliday junction branch migration complex subunit RuvA from Bifidobacterium longum subsp. infantis (strain ATCC 15697 / DSM 20088 / JCM 1222 / NCTC 11817 / S12).